A 662-amino-acid chain; its full sequence is Acetyl-coenzyme A synthetase (662 aa).

CoA-binding positions include 197–200 (RKGK) and T317. ATP is bound by residues 393 to 395 (GEP), 417 to 422 (DTWWQT), D510, and R525. A CoA-binding site is contributed by S533. Position 536 (R536) interacts with ATP. Residues H549 and V552 each contribute to the Mg(2+) site. K623 bears the N6-acetyllysine mark.

It belongs to the ATP-dependent AMP-binding enzyme family. It depends on Mg(2+) as a cofactor. Acetylated. Deacetylation by the SIR2-homolog deacetylase activates the enzyme.

It catalyses the reaction acetate + ATP + CoA = acetyl-CoA + AMP + diphosphate. Catalyzes the conversion of acetate into acetyl-CoA (AcCoA), an essential intermediate at the junction of anabolic and catabolic pathways. AcsA undergoes a two-step reaction. In the first half reaction, AcsA combines acetate with ATP to form acetyl-adenylate (AcAMP) intermediate. In the second half reaction, it can then transfer the acetyl group from AcAMP to the sulfhydryl group of CoA, forming the product AcCoA. The polypeptide is Acetyl-coenzyme A synthetase (Helicobacter pylori (strain G27)).